The following is a 100-amino-acid chain: Large ribosomal subunit protein uL23 (100 aa).

This sequence belongs to the universal ribosomal protein uL23 family. Part of the 50S ribosomal subunit. Contacts protein L29, and trigger factor when it is bound to the ribosome.

One of the early assembly proteins it binds 23S rRNA. One of the proteins that surrounds the polypeptide exit tunnel on the outside of the ribosome. Forms the main docking site for trigger factor binding to the ribosome. The protein is Large ribosomal subunit protein uL23 of Mycolicibacterium vanbaalenii (strain DSM 7251 / JCM 13017 / BCRC 16820 / KCTC 9966 / NRRL B-24157 / PYR-1) (Mycobacterium vanbaalenii).